Consider the following 448-residue polypeptide: Beclin-1 (448 aa).

N-acetylmethionine is present on M1. Residues S14 and S29 each carry the phosphoserine modification. A disordered region spans residues T47–R72. A phosphoserine; by AMPK mark is found at S88, S91, and S94. Positions T106–S125 match the BH3 motif. Residues L110 to C157 are interaction with BCL2 and BCL2L1 isoform Bcl-X(L). T117 carries the phosphothreonine; by DAPK1 modification. Residues D140–V267 adopt a coiled-coil conformation. The interval D243–K448 is evolutionary conserved domain (ECD). Glycyl lysine isopeptide (Lys-Gly) (interchain with G-Cter in ubiquitin) cross-links involve residues K400 and K435. The required for membrane-association stretch occupies residues W423–K448.

The protein belongs to the beclin family. A homodimeric form is proposed to exist; this metastable form readily transits to ATG14- or UVRAG-containing complexes with BECN1:UVRAG being more stable than BECN1:ATG14. Component of the PI3K (PI3KC3/PI3K-III/class III phosphatidylinositol 3-kinase) complex the core of which is composed of the catalytic subunit PIK3C3, the regulatory subunit PIK3R4 and BECN1 associating with additional regulatory/auxiliary subunits to form alternative complex forms. Alternative complex forms containing a fourth regulatory subunit in a mutually exclusive manner are PI3K complex I (PI3KC3-C1) containing ATG14, and PI3K complex II (PI3KC3-C2) containing UVRAG. PI3KC3-C1 displays a V-shaped architecture with PIK3R4 serving as a bridge between PIK3C3 and the ATG14:BECN1 subcomplex. Both, PI3KC3-C1 and PI3KC3-C2, can associate with further regulatory subunits, such as RUBCN, SH3GLB1/Bif-1 and AMBRA1. PI3KC3-C1 probably associates with PIK3CB. Forms a complex with PPP2CA and AMBRA1; AMBRA1 and BECN1 components of the complex regulate MYC stability via different pathways. Component of the complex, at least composed of LRPPRC, BECN1 and BCL2; the interactions prevent BECN1 from forming an autophagy-inducing complex with PIK3C3. Interacts with AMBRA1, GOPC, GRID2. Interacts with BCL2 and BCL2L1 isoform Bcl-X(L); the interaction inhibits BECN1 function in promoting autophagy by interfering with the formation of the PI3K complex. Interacts with cytosolic HMGB1; inhibits the interaction of BECN1 and BCL2 leading to promotion of autophagy. Interacts with USP10, USP13, DAPK1, RAB39A. Interacts with SLAMF1. Interacts with the poly-Gln domain of ATXN3; the interaction causes deubiquitination at Lys-400 and stabilizes BECN1. Interacts with VMP1. Interacts with TRIM5; the interaction causes activation of BECN1 by causing its dissociation from its inhibitors BCL2 and TAB2. Interacts with active ULK1 (phosphorylated on 'Ser-317') and MEFV simultaneously. Interacts with WDR81 and WDR91; negatively regulates the PI3 kinase/PI3K activity associated with endosomal membranes. Interacts with LAPTM4B; competes with EGFR for LAPTM4B binding; regulates EGFR activity. Interacts with TRIM50. Interacts with TRIM16. Interacts with ATG14; this interaction is increased in the absence of TMEM39A. Interacts with WASHC1; preventing interaction with AMBRA1 and the DCX(AMBRA1) complex and subsequent ubiquitination. Interacts with TRIM17. Interacts with BCL2L10/BCL-B (via BH1 domain). Interacts with SH3BGRL. Interacts with IRGM; enhancing BECN1-interacting partners and influencing the composition of the BECN1 complex. Interacts with ARMC3. Interacts with LRPPRC. In terms of processing, phosphorylation at Thr-117 by DAPK1 reduces its interaction with BCL2 and BCL2L1 and promotes induction of autophagy. In response to autophagic stimuli, phosphorylated at serine residues by AMPK in an ATG14-dependent manner, and this phosphorylation is critical for maximally efficient autophagy. Post-translationally, polyubiquitinated by NEDD4, both with 'Lys-11'- and 'Lys-63'-linkages. 'Lys-11'-linked polyubiquitination leads to degradation and is enhanced when the stabilizing interaction partner VPS34 is depleted. Deubiquitinated by USP10 and USP13, leading to stabilize the PIK3C3/VPS34-containing complexes. Polyubiquitinated at Lys-400 with 'Lys-48'-linkages. 'Lys-48'-linked polyubiquitination of Lys-400 leads to degradation. Deubiquitinated by ATXN3, leading to stabilization. Ubiquitinated at Lys-435 via 'Lys-63'-linkage by the DCX(AMBRA1) complex, thereby increasing the association between BECN1 and PIK3C3 to promote PIK3C3 activity. 'Lys-48'-linked ubiquitination by RNF216 leads to proteasomal degradation and autophagy inhibition. Proteolytically processed by caspases including CASP8 and CASP3; the C-terminal fragments lack autophagy-inducing capacity and are proposed to induce apoptosis. Thus the cleavage is proposed to be an determinant to switch from autophagy to apoptosis pathways affecting cellular homeostasis including viral infections and survival of tumor cells.

Its subcellular location is the cytoplasm. It localises to the golgi apparatus. The protein localises to the trans-Golgi network membrane. The protein resides in the endosome membrane. It is found in the endoplasmic reticulum membrane. Its subcellular location is the mitochondrion membrane. It localises to the cytoplasmic vesicle. The protein localises to the autophagosome. The protein resides in the mitochondrion. It is found in the nucleus. In terms of biological role, plays a central role in autophagy. Acts as a core subunit of the PI3K complex that mediates formation of phosphatidylinositol 3-phosphate; different complex forms are believed to play a role in multiple membrane trafficking pathways: PI3KC3-C1 is involved in initiation of autophagosomes and PI3KC3-C2 in maturation of autophagosomes and endocytosis. Involved in regulation of degradative endocytic trafficking and required for the abscission step in cytokinesis, probably in the context of PI3KC3-C2. Essential for the formation of PI3KC3-C2 but not PI3KC3-C1 PI3K complex forms. Involved in endocytosis. May play a role in antiviral host defense. Beclin-1-C 35 kDa localized to mitochondria can promote apoptosis; it induces the mitochondrial translocation of BAX and the release of proapoptotic factors. The polypeptide is Beclin-1 (Becn1) (Rattus norvegicus (Rat)).